A 938-amino-acid polypeptide reads, in one-letter code: Bifunctional glutamine synthetase adenylyltransferase/adenylyl-removing enzyme (938 aa).

The interval 1 to 457 (MLEADAARLK…HFDHVFGDPS (457 aa)) is adenylyl removase. The adenylyl transferase stretch occupies residues 460-938 (AHTLDSMWAA…ALWTIVFGSA (479 aa)).

The protein belongs to the GlnE family. Mg(2+) serves as cofactor.

The enzyme catalyses [glutamine synthetase]-O(4)-(5'-adenylyl)-L-tyrosine + phosphate = [glutamine synthetase]-L-tyrosine + ADP. It carries out the reaction [glutamine synthetase]-L-tyrosine + ATP = [glutamine synthetase]-O(4)-(5'-adenylyl)-L-tyrosine + diphosphate. Its function is as follows. Involved in the regulation of glutamine synthetase GlnA, a key enzyme in the process to assimilate ammonia. When cellular nitrogen levels are high, the C-terminal adenylyl transferase (AT) inactivates GlnA by covalent transfer of an adenylyl group from ATP to specific tyrosine residue of GlnA, thus reducing its activity. Conversely, when nitrogen levels are low, the N-terminal adenylyl removase (AR) activates GlnA by removing the adenylyl group by phosphorolysis, increasing its activity. The regulatory region of GlnE binds the signal transduction protein PII (GlnB) which indicates the nitrogen status of the cell. The chain is Bifunctional glutamine synthetase adenylyltransferase/adenylyl-removing enzyme from Aromatoleum aromaticum (strain DSM 19018 / LMG 30748 / EbN1) (Azoarcus sp. (strain EbN1)).